The following is a 209-amino-acid chain: Ribosomal RNA large subunit methyltransferase E (209 aa).

Residues Gly63, Trp65, Asp83, Asp99, and Asp124 each coordinate S-adenosyl-L-methionine. The Proton acceptor role is filled by Lys164.

Belongs to the class I-like SAM-binding methyltransferase superfamily. RNA methyltransferase RlmE family.

It localises to the cytoplasm. The catalysed reaction is uridine(2552) in 23S rRNA + S-adenosyl-L-methionine = 2'-O-methyluridine(2552) in 23S rRNA + S-adenosyl-L-homocysteine + H(+). Its function is as follows. Specifically methylates the uridine in position 2552 of 23S rRNA at the 2'-O position of the ribose in the fully assembled 50S ribosomal subunit. This Aliivibrio fischeri (strain ATCC 700601 / ES114) (Vibrio fischeri) protein is Ribosomal RNA large subunit methyltransferase E.